Reading from the N-terminus, the 159-residue chain is MNPVGINGTLIVQLVTFVILVALLYKYMYGPLRKVMDDRRAKIADGLAAAERGKEEMALAQKRATELVREAKDKAAEIIANAERRGVELREEAQGKAREEADRIIASARAEIDVETNRAREVLRGQVVELVVNGTQRILHREIDDQTHRDIIDRMVGQL.

Residues 4–24 form a helical membrane-spanning segment; sequence VGINGTLIVQLVTFVILVALL.

Belongs to the ATPase B chain family. F-type ATPases have 2 components, F(1) - the catalytic core - and F(0) - the membrane proton channel. F(1) has five subunits: alpha(3), beta(3), gamma(1), delta(1), epsilon(1). F(0) has three main subunits: a(1), b(2) and c(10-14). The alpha and beta chains form an alternating ring which encloses part of the gamma chain. F(1) is attached to F(0) by a central stalk formed by the gamma and epsilon chains, while a peripheral stalk is formed by the delta and b chains.

It is found in the cell inner membrane. Its function is as follows. F(1)F(0) ATP synthase produces ATP from ADP in the presence of a proton or sodium gradient. F-type ATPases consist of two structural domains, F(1) containing the extramembraneous catalytic core and F(0) containing the membrane proton channel, linked together by a central stalk and a peripheral stalk. During catalysis, ATP synthesis in the catalytic domain of F(1) is coupled via a rotary mechanism of the central stalk subunits to proton translocation. Component of the F(0) channel, it forms part of the peripheral stalk, linking F(1) to F(0). The chain is ATP synthase subunit b from Acidithiobacillus ferridurans.